An 88-amino-acid polypeptide reads, in one-letter code: Small ribosomal subunit protein uS15 (88 aa).

The protein belongs to the universal ribosomal protein uS15 family. As to quaternary structure, part of the 30S ribosomal subunit. Forms a bridge to the 50S subunit in the 70S ribosome, contacting the 23S rRNA.

Its function is as follows. One of the primary rRNA binding proteins, it binds directly to 16S rRNA where it helps nucleate assembly of the platform of the 30S subunit by binding and bridging several RNA helices of the 16S rRNA. In terms of biological role, forms an intersubunit bridge (bridge B4) with the 23S rRNA of the 50S subunit in the ribosome. In Mesoplasma florum (strain ATCC 33453 / NBRC 100688 / NCTC 11704 / L1) (Acholeplasma florum), this protein is Small ribosomal subunit protein uS15.